The primary structure comprises 412 residues: Na(+)-translocating NADH-quinone reductase subunit B (412 aa).

A run of 3 helical transmembrane segments spans residues 57-77 (MILVWFAVFPAMFWGMYNVGL), 127-147 (VFFLPIYITVFIVGGFWEVLF), and 163-183 (SILFALIVPPTLPLWQAALGI). Residue T236 is modified to FMN phosphoryl threonine. The next 5 membrane-spanning stretches (helical) occupy residues 270–290 (GSIGEVSTLMIFIGGAIILFG), 297–317 (IVAGVMIGMIATATLFNVIGS), 322–342 (MFAMPWYWHLVLGGFAFGMMF), 358–378 (WSYGVLIGVMCVLIRVVNPAY), and 381–401 (GMMLAILFANLFAPLFDYLVV).

The protein belongs to the NqrB/RnfD family. As to quaternary structure, composed of six subunits; NqrA, NqrB, NqrC, NqrD, NqrE and NqrF. FMN serves as cofactor.

The protein resides in the cell inner membrane. It carries out the reaction a ubiquinone + n Na(+)(in) + NADH + H(+) = a ubiquinol + n Na(+)(out) + NAD(+). Functionally, NQR complex catalyzes the reduction of ubiquinone-1 to ubiquinol by two successive reactions, coupled with the transport of Na(+) ions from the cytoplasm to the periplasm. NqrA to NqrE are probably involved in the second step, the conversion of ubisemiquinone to ubiquinol. This Klebsiella pneumoniae subsp. pneumoniae (strain ATCC 700721 / MGH 78578) protein is Na(+)-translocating NADH-quinone reductase subunit B.